Consider the following 104-residue polypeptide: Large ribosomal subunit protein uL24 (104 aa).

Belongs to the universal ribosomal protein uL24 family. As to quaternary structure, part of the 50S ribosomal subunit.

In terms of biological role, one of two assembly initiator proteins, it binds directly to the 5'-end of the 23S rRNA, where it nucleates assembly of the 50S subunit. Its function is as follows. One of the proteins that surrounds the polypeptide exit tunnel on the outside of the subunit. The chain is Large ribosomal subunit protein uL24 from Bartonella tribocorum (strain CIP 105476 / IBS 506).